A 3564-amino-acid polypeptide reads, in one-letter code: CUB and sushi domain-containing protein 1 (3564 aa).

The first 26 residues, 1-26 (MTAWRRFQSLLLLLGLLVLCARLLTA), serve as a signal peptide directing secretion. The Extracellular segment spans residues 27 to 3487 (AKGQNCGGLV…SHYHGTSSGS (3461 aa)). 10 disulfide bridges follow: C32–C58, C145–C185, C171–C202, C208–C234, C349–C389, C375–C406, C411–C437, C527–C567, C553–C580, and C584–C610. In terms of domain architecture, CUB 1 spans 32 to 140 (CGGLVQGPNG…QGFKALYEVL (109 aa)). Residues N40 and N57 are each glycosylated (N-linked (GlcNAc...) asparagine). In terms of domain architecture, Sushi 1 spans 143–204 (HTCGNPGEIL…WDFPAPFCRA (62 aa)). The CUB 2 domain occupies 208–312 (CGGTLRGTSS…KGFNAQFQVK (105 aa)). The Sushi 2 domain occupies 347–408 (DMCPDPGIPE…WSDHRPICRA (62 aa)). Residues 411–522 (CGSNLRGPSG…PGFKAVYQEI (112 aa)) enclose the CUB 3 domain. Residues 525–582 (GGCGDPGIPAYGKRTGSSFLHGDTLTFECPAAFELVGERVITCQQNNQWSGNKPSCVF) enclose the Sushi 3 domain. The CUB 4 domain occupies 584–692 (CFFNFTASSG…RGFNITYTTF (109 aa)). 2 N-linked (GlcNAc...) asparagine glycosylation sites follow: N587 and N686. The Sushi 4 domain maps to 695 to 756 (NECHDPGIPI…WSSTVPRCEA (62 aa)). 6 disulfide bridges follow: C697–C738, C723–C754, C758–C784, C873–C913, C899–C926, and C930–C956. In terms of domain architecture, CUB 5 spans 758 to 866 (CGGHLTASSG…IGFLIHYESV (109 aa)). A Sushi 5 domain is found at 871–928 (DSCLDPGIPVNGHRHGGDFGIRSTVTFSCDPGYTLSDDEPLVCERNHQWNHALPSCDA). One can recognise a CUB 6 domain in the interval 930–1040 (CGGYIQGKSG…EGFNITFSEY (111 aa)). Residues N955, N1015, and N1034 are each glycosylated (N-linked (GlcNAc...) asparagine). Residues 1043–1102 (EPCDDPGVPAFSRRIGFHFGVGDSLTFSCFLGYRLEGATKLTCLGGGRRVWSAPLPRCVA) form the Sushi 6 domain. Cystine bridges form between C1045/C1085, C1071/C1100, and C1104/C1130. The CUB 7 domain maps to 1104–1212 (CGASVKGNEG…QGFQLTYTSF (109 aa)). N-linked (GlcNAc...) asparagine glycosylation is found at N1184 and N1197. In terms of domain architecture, Sushi 7 spans 1215-1275 (VKCEDPGIPN…WDKPLPSCIA (61 aa)). 12 cysteine pairs are disulfide-bonded: C1217–C1258, C1244–C1273, C1277–C1304, C1391–C1431, C1417–C1447, C1451–C1477, C1564–C1604, C1590–C1621, C1625–C1651, C1741–C1781, C1767–C1798, and C1802–C1828. The 110-residue stretch at 1277–1386 (CGGQIHAATS…SGFSIQFSTS (110 aa)) folds into the CUB 8 domain. Positions 1389–1449 (ATCNDPGMPQ…WQPDPPTCIA (61 aa)) constitute a Sushi 8 domain. An N-linked (GlcNAc...) asparagine glycan is attached at N1399. Residues 1451-1559 (CGGNLTGPAG…SGFAIEFKEK (109 aa)) form the CUB 9 domain. N-linked (GlcNAc...) asparagine glycans are attached at residues N1454 and N1572. Residues 1562–1623 (EACFDPGNIM…WDQVLPSCNA (62 aa)) form the Sushi 9 domain. The CUB 10 domain occupies 1625–1733 (CGGQYTGSEG…RGFHFVYQAV (109 aa)). A glycan (N-linked (GlcNAc...) asparagine) is linked at N1644. One can recognise a Sushi 10 domain in the interval 1739–1800 (TQCSSVPEPR…WNDTIPSCVV (62 aa)). N-linked (GlcNAc...) asparagine glycans are attached at residues N1792, N1805, and N1882. The region spanning 1802–1910 (CSGNFTQRRG…AGFHLEYKTV (109 aa)) is the CUB 11 domain. In terms of domain architecture, Sushi 11 spans 1913–1972 (AACQEPALPSNSIKIGDRYMVNDVLSFQCEPGYTLQGRSHISCMPGTVRRWNYPSPLCIA). 3 disulfide bridges follow: C1915–C1955, C1941–C1970, and C1974–C2000. The region spanning 1974-2082 (CGGTLSTLGG…QGFKLAYQAY (109 aa)) is the CUB 12 domain. Residue N2018 is glycosylated (N-linked (GlcNAc...) asparagine). The Sushi 12 domain occupies 2085-2144 (QNCPDPPPFQNGYMINSDYSVGQSVSFECYPGYILIGHPVLTCQHGINRNWNYPFPRCDA). 3 disulfides stabilise this stretch: C2087/C2127, C2113/C2142, and C2146/C2172. Residues 2146–2257 (CGYNVTSQNG…LNFHAFQLKK (112 aa)) enclose the CUB 13 domain. 3 N-linked (GlcNAc...) asparagine glycosylation sites follow: N2149, N2154, and N2187. A Sushi 13 domain is found at 2256–2317 (KKCQPPPAVP…FEGSLPTCEA (62 aa)). Cystine bridges form between C2258–C2300, C2286–C2315, and C2319–C2347. Positions 2319 to 2430 (CPANEVRTGS…KGFKIRYAAP (112 aa)) constitute a CUB 14 domain. N2358, N2394, N2400, N2445, N2470, and N2503 each carry an N-linked (GlcNAc...) asparagine glycan. 15 Sushi domains span residues 2430–2492 (PYCS…LCQA), 2493–2554 (VSCG…TCKP), 2555–2619 (VACP…SCRV), 2620–2677 (ISCG…RCLA), 2678–2735 (GHCG…VCVP), 2736–2793 (ITCG…TCRV), 2794–2856 (VNCS…KCLA), 2857–2914 (ISCG…HCTG), 2918–2975 (GFCG…VCEA), 2976–3034 (VSCG…DCTI), 3035–3094 (ISCG…VCKA), 3095–3152 (VLCP…QCLP), 3153–3210 (VFCG…TCID), 3214–3272 (NTCP…ECIP), and 3273–3332 (HACR…VCKS). Cystine bridges form between C2432-C2473, C2459-C2490, C2495-C2537, C2521-C2552, C2557-C2602, C2588-C2617, C2622-C2662, C2648-C2675, C2680-C2720, C2706-C2733, C2738-C2778, and C2764-C2791. N-linked (GlcNAc...) asparagine glycosylation is present at N2605. N2750 and N2761 each carry an N-linked (GlcNAc...) asparagine glycan. A glycan (N-linked (GlcNAc...) asparagine) is linked at N2795. 18 cysteine pairs are disulfide-bonded: C2796–C2841, C2827–C2854, C2859–C2899, C2885–C2912, C2920–C2960, C2946–C2973, C2978–C3019, C3005–C3032, C3037–C3079, C3063–C3092, C3097–C3137, C3123–C3150, C3155–C3195, C3181–C3208, C3216–C3257, C3243–C3270, C3275–C3317, and C3302–C3330. N2894 is a glycosylation site (N-linked (GlcNAc...) asparagine). N-linked (GlcNAc...) asparagine glycosylation occurs at N2963. Residues N3022 and N3056 are each glycosylated (N-linked (GlcNAc...) asparagine). The N-linked (GlcNAc...) asparagine glycan is linked to N3105. 2 N-linked (GlcNAc...) asparagine glycosylation sites follow: N3228 and N3260. N3339, N3379, and N3386 each carry an N-linked (GlcNAc...) asparagine glycan. The helical transmembrane segment at 3488 to 3508 (VAAAILVPFFALILSGFAFYL) threads the bilayer. Residues 3509-3564 (YKHRTRPKVQYNGYAGHENSNGQASFENPMYDTNLKPTEAKAVRFDTTLNTVCTVV) lie on the Cytoplasmic side of the membrane.

It belongs to the CSMD family. In terms of tissue distribution, weakly expressed in most tissues, except in brain. Expressed at intermediate level in brain, including cerebellum, substantia nigra, hippocampus and fetal brain.

It is found in the membrane. Potential suppressor of squamous cell carcinomas. The protein is CUB and sushi domain-containing protein 1 (CSMD1) of Homo sapiens (Human).